The sequence spans 206 residues: Large ribosomal subunit protein uL4 (206 aa).

Positions 47–77 (TRAQKGRSDVTGSTRKQWRQKGTGRARTGAA) are disordered.

The protein belongs to the universal ribosomal protein uL4 family. In terms of assembly, part of the 50S ribosomal subunit.

In terms of biological role, one of the primary rRNA binding proteins, this protein initially binds near the 5'-end of the 23S rRNA. It is important during the early stages of 50S assembly. It makes multiple contacts with different domains of the 23S rRNA in the assembled 50S subunit and ribosome. Its function is as follows. Forms part of the polypeptide exit tunnel. The protein is Large ribosomal subunit protein uL4 of Nitrosomonas europaea (strain ATCC 19718 / CIP 103999 / KCTC 2705 / NBRC 14298).